Reading from the N-terminus, the 239-residue chain is tRNA (guanine-N(1)-)-methyltransferase (239 aa).

Residues glycine 108 and isoleucine 127–leucine 132 each bind S-adenosyl-L-methionine.

This sequence belongs to the RNA methyltransferase TrmD family. In terms of assembly, homodimer.

The protein localises to the cytoplasm. The enzyme catalyses guanosine(37) in tRNA + S-adenosyl-L-methionine = N(1)-methylguanosine(37) in tRNA + S-adenosyl-L-homocysteine + H(+). In terms of biological role, specifically methylates guanosine-37 in various tRNAs. The sequence is that of tRNA (guanine-N(1)-)-methyltransferase from Lactobacillus helveticus (strain DPC 4571).